The sequence spans 283 residues: Nucleotide-binding protein ACIAD3059 (283 aa).

9–16 (GQSGSGKS) is a binding site for ATP. Position 59-62 (59-62 (DVRS)) interacts with GTP.

It belongs to the RapZ-like family.

In terms of biological role, displays ATPase and GTPase activities. The protein is Nucleotide-binding protein ACIAD3059 of Acinetobacter baylyi (strain ATCC 33305 / BD413 / ADP1).